A 1081-amino-acid chain; its full sequence is Isoleucine--tRNA ligase (1081 aa).

The short motif at 53–63 (PFATGLPHYGN) is the 'HIGH' region element. A 'KMSKS' region motif is present at residues 607–611 (KMSKS). K610 serves as a coordination point for ATP.

Belongs to the class-I aminoacyl-tRNA synthetase family.

It catalyses the reaction tRNA(Ile) + L-isoleucine + ATP = L-isoleucyl-tRNA(Ile) + AMP + diphosphate. This Tetrahymena thermophila protein is Isoleucine--tRNA ligase (ILSA).